The sequence spans 301 residues: Ribosomal protein L11 methyltransferase (301 aa).

4 residues coordinate S-adenosyl-L-methionine: Thr130, Gly151, Asp172, and Asn239.

This sequence belongs to the methyltransferase superfamily. PrmA family.

The protein resides in the cytoplasm. It carries out the reaction L-lysyl-[protein] + 3 S-adenosyl-L-methionine = N(6),N(6),N(6)-trimethyl-L-lysyl-[protein] + 3 S-adenosyl-L-homocysteine + 3 H(+). In terms of biological role, methylates ribosomal protein L11. The protein is Ribosomal protein L11 methyltransferase of Campylobacter hominis (strain ATCC BAA-381 / DSM 21671 / CCUG 45161 / LMG 19568 / NCTC 13146 / CH001A).